A 208-amino-acid polypeptide reads, in one-letter code: V-type ATP synthase subunit D (208 aa).

Belongs to the V-ATPase D subunit family.

In terms of biological role, produces ATP from ADP in the presence of a proton gradient across the membrane. In Chlamydia abortus (strain DSM 27085 / S26/3) (Chlamydophila abortus), this protein is V-type ATP synthase subunit D.